We begin with the raw amino-acid sequence, 468 residues long: Ribulose bisphosphate carboxylase large chain (468 aa).

Position 5 is an N6,N6,N6-trimethyllysine (Lys-5). Residues Asn-114 and Thr-164 each coordinate substrate. Lys-166 functions as the Proton acceptor in the catalytic mechanism. Lys-168 provides a ligand contact to substrate. Mg(2+) contacts are provided by Lys-192, Asp-194, and Glu-195. Lys-192 carries the N6-carboxylysine modification. His-285 acts as the Proton acceptor in catalysis. Residues Arg-286, His-318, and Ser-370 each contribute to the substrate site.

The protein belongs to the RuBisCO large chain family. Type I subfamily. Heterohexadecamer of 8 large chains and 8 small chains; disulfide-linked. The disulfide link is formed within the large subunit homodimers. The cofactor is Mg(2+). Post-translationally, the disulfide bond which can form in the large chain dimeric partners within the hexadecamer appears to be associated with oxidative stress and protein turnover.

It localises to the plastid. The protein resides in the chloroplast. It carries out the reaction 2 (2R)-3-phosphoglycerate + 2 H(+) = D-ribulose 1,5-bisphosphate + CO2 + H2O. The enzyme catalyses D-ribulose 1,5-bisphosphate + O2 = 2-phosphoglycolate + (2R)-3-phosphoglycerate + 2 H(+). RuBisCO catalyzes two reactions: the carboxylation of D-ribulose 1,5-bisphosphate, the primary event in carbon dioxide fixation, as well as the oxidative fragmentation of the pentose substrate in the photorespiration process. Both reactions occur simultaneously and in competition at the same active site. The sequence is that of Ribulose bisphosphate carboxylase large chain from Anthospermum herbaceum.